We begin with the raw amino-acid sequence, 334 residues long: Ornithine carbamoyltransferase (334 aa).

Residues 57–60 (STRT), arginine 108, and 135–138 (HPTQ) contribute to the carbamoyl phosphate site. L-ornithine is bound by residues asparagine 168, aspartate 232, and 236–237 (SM). Residues 274 to 275 (CL) and arginine 321 each bind carbamoyl phosphate.

The protein belongs to the aspartate/ornithine carbamoyltransferase superfamily. OTCase family.

The protein localises to the cytoplasm. It carries out the reaction carbamoyl phosphate + L-ornithine = L-citrulline + phosphate + H(+). It functions in the pathway amino-acid biosynthesis; L-arginine biosynthesis; L-arginine from L-ornithine and carbamoyl phosphate: step 1/3. In terms of biological role, reversibly catalyzes the transfer of the carbamoyl group from carbamoyl phosphate (CP) to the N(epsilon) atom of ornithine (ORN) to produce L-citrulline. This is Ornithine carbamoyltransferase from Cutibacterium acnes (strain DSM 16379 / KPA171202) (Propionibacterium acnes).